The following is a 115-amino-acid chain: Glycine cleavage system H-like protein (115 aa).

The 83-residue stretch at 17 to 99 (VVRLGLTEKM…EGEGWLAVVR (83 aa)) folds into the Lipoyl-binding domain. The residue at position 58 (K58) is an N6-lipoyllysine.

Belongs to the GcvH family. (R)-lipoate serves as cofactor.

The sequence is that of Glycine cleavage system H-like protein from Chlamydia pneumoniae (Chlamydophila pneumoniae).